Here is a 329-residue protein sequence, read N- to C-terminus: MQTLAENLTSQAISPTLEKLILTLANTSKEISHAVRHGALAGVLGATEQENVQGETQKKLDIITNDMLKDALKADGTVRGIASEEEDYVVEADANGEFLVCFDPLDGSSNIDINSLVGTIFSVLPAPAGELTEKSFLQAGRNQVAAGYVLYGPSTMLALTTGQGVQLFTLNPETNEFLLTNGAMAISKDTGEFAINMSNQRFWEAPMQTYISDLLLGKIGPREKSFNMRWIAAMVGDVHRVLCRGGIFTYPTDNKNPEKPYKLRLMYEANPMAFLVEQAGGKASTGYETIMDIQPTEIHQRVAVILGSANEVDACLEYHGIDYSEEPVL.

4 residues coordinate Mg(2+): Glu-84, Asp-103, Leu-105, and Asp-106. Substrate contacts are provided by residues Asp-106–Ser-109, Asn-196, and Lys-262. A Mg(2+)-binding site is contributed by Glu-268.

It belongs to the FBPase class 1 family. In terms of assembly, homotetramer. Mg(2+) serves as cofactor.

It localises to the cytoplasm. It catalyses the reaction beta-D-fructose 1,6-bisphosphate + H2O = beta-D-fructose 6-phosphate + phosphate. It functions in the pathway carbohydrate biosynthesis; gluconeogenesis. This Shewanella pealeana (strain ATCC 700345 / ANG-SQ1) protein is Fructose-1,6-bisphosphatase class 1.